Here is a 364-residue protein sequence, read N- to C-terminus: DNA replication and repair protein RecF (364 aa).

30–37 (GENGSGKT) lines the ATP pocket.

It belongs to the RecF family.

It is found in the cytoplasm. In terms of biological role, the RecF protein is involved in DNA metabolism; it is required for DNA replication and normal SOS inducibility. RecF binds preferentially to single-stranded, linear DNA. It also seems to bind ATP. The polypeptide is DNA replication and repair protein RecF (Xylella fastidiosa (strain M23)).